The following is an 87-amino-acid chain: MNISRNEQRALHVLALGGRILHERDDRRKITAVTCVTREGMILSDFALETFLRLRRKRLIESRSGSPYCISKRGRLSVRAQLDNQGA.

This sequence belongs to the UPF0386 family.

The polypeptide is UPF0386 protein RSKD131_0371 (Cereibacter sphaeroides (strain KD131 / KCTC 12085) (Rhodobacter sphaeroides)).